A 365-amino-acid chain; its full sequence is Serine protease 40 (365 aa).

The N-terminal stretch at 1 to 34 is a signal peptide; it reads MCGIRAKKSGLGGYGAGLLAALLGVSFLSQHAQT. N44 carries N-linked (GlcNAc...) asparagine glycosylation. Residues 69 to 313 enclose the Peptidase S1 domain; the sequence is IYGGQIAGAE…FDKWIKDNKK (245 aa). C94 and C110 are joined by a disulfide. Residues H109 and D159 each act as charge relay system in the active site. 3 cysteine pairs are disulfide-bonded: C193-C270, C226-C249, and C260-C288. The Charge relay system role is filled by S264. Positions 312–343 are disordered; the sequence is KKSSSNSKPGESPHHPGSPENENPEGDNKNQG.

The protein belongs to the peptidase S1 family. Expressed in testis. More specifically, abundantly expressed in the haploid round spermatid.

It localises to the cytoplasmic vesicle. The protein resides in the secretory vesicle. The protein localises to the acrosome. It is found in the secreted. In terms of biological role, may play an important role in the sperm/egg interaction; released during the acrosome reaction. The sequence is that of Serine protease 40 (Prss40) from Mus musculus (Mouse).